Here is a 324-residue protein sequence, read N- to C-terminus: Putative transport protein TM_1187 (324 aa).

A run of 8 helical transmembrane segments spans residues 12–32, 62–82, 105–125, 131–151, 190–210, 227–247, 252–272, and 285–305; these read LYLVLFLVLAKLSPFIITALI, ISNVLVFLTIAYSAVNFFPVI, IPGWLSSILSSISASFSEGAL, IVGYVPSFITAAILIVITAFI, GGQVLVAIFVGLFVGFGAFIF, FVPYLGVVISAIPLLMLAFSV, GLLIGTIILVAANQLEMWVLA, and FIILIMILILGDLFSFGGVLI.

Belongs to the autoinducer-2 exporter (AI-2E) (TC 2.A.86) family.

Its subcellular location is the cell membrane. This Thermotoga maritima (strain ATCC 43589 / DSM 3109 / JCM 10099 / NBRC 100826 / MSB8) protein is Putative transport protein TM_1187.